The sequence spans 125 residues: Small ribosomal subunit protein uS13 (125 aa).

Positions 90 to 125 (QRHRKGLPVRGQRTKTNARTRKGPKRTVAGKKKATK) are disordered.

This sequence belongs to the universal ribosomal protein uS13 family. As to quaternary structure, part of the 30S ribosomal subunit. Forms a loose heterodimer with protein S19. Forms two bridges to the 50S subunit in the 70S ribosome.

Its function is as follows. Located at the top of the head of the 30S subunit, it contacts several helices of the 16S rRNA. In the 70S ribosome it contacts the 23S rRNA (bridge B1a) and protein L5 of the 50S subunit (bridge B1b), connecting the 2 subunits; these bridges are implicated in subunit movement. Contacts the tRNAs in the A and P-sites. This Bifidobacterium longum (strain DJO10A) protein is Small ribosomal subunit protein uS13.